The primary structure comprises 1052 residues: Eukaryotic translation initiation factor 3 subunit A (1052 aa).

Residues 325–505 (IQYAASAVLL…GSLHFNNNIF (181 aa)) enclose the PCI domain. Coiled coils occupy residues 568–712 (REHV…RLRE) and 769–882 (EKTA…SAQT). Basic and acidic residues-rich tracts occupy residues 570-600 (HVSNLSRRDEIEKQKEELEQSRRRRHQEQMQ) and 793-874 (KIRL…EQEK). Disordered stretches follow at residues 570-606 (HVSNLSRRDEIEKQKEELEQSRRRRHQEQMQKHHQNQ) and 793-1052 (KIRL…DDKN). 2 stretches are compositionally biased toward polar residues: residues 875-887 (LSNLSAQTSQPTW) and 895-906 (APTTAAPSSMRV). 4 stretches are compositionally biased toward basic and acidic residues: residues 942–952 (DRGDRAPRDTG), 960–970 (DRGDRAPRDTG), 979–1013 (RAPRDFSGRSEPSRSGPRDFSGRSEAGRTSGERRA), and 1037–1052 (GSERRVNIPSRGDDKN).

It belongs to the eIF-3 subunit A family. Component of the eukaryotic translation initiation factor 3 (eIF-3) complex.

Its subcellular location is the cytoplasm. Its function is as follows. RNA-binding component of the eukaryotic translation initiation factor 3 (eIF-3) complex, which is involved in protein synthesis of a specialized repertoire of mRNAs and, together with other initiation factors, stimulates binding of mRNA and methionyl-tRNAi to the 40S ribosome. The eIF-3 complex specifically targets and initiates translation of a subset of mRNAs involved in cell proliferation. In Monosiga brevicollis (Choanoflagellate), this protein is Eukaryotic translation initiation factor 3 subunit A.